The sequence spans 395 residues: Elongation factor Tu (395 aa).

The region spanning 10-205 (KPHVNIGTIG…VDNWIPIPPR (196 aa)) is the tr-type G domain. The tract at residues 19-26 (GHVDHGKT) is G1. GTP is bound at residue 19 to 26 (GHVDHGKT). Thr26 is a binding site for Mg(2+). Positions 60–64 (GITIN) are G2. The tract at residues 81 to 84 (DCPG) is G3. Residues 81-85 (DCPGH) and 136-139 (NKVD) each bind GTP. Residues 136-139 (NKVD) are G4. A G5 region spans residues 174-176 (SAL).

It belongs to the TRAFAC class translation factor GTPase superfamily. Classic translation factor GTPase family. EF-Tu/EF-1A subfamily. As to quaternary structure, monomer.

It localises to the cytoplasm. It catalyses the reaction GTP + H2O = GDP + phosphate + H(+). GTP hydrolase that promotes the GTP-dependent binding of aminoacyl-tRNA to the A-site of ribosomes during protein biosynthesis. This Hymenobacter ocellatus (Parahymenobacter ocellatus) protein is Elongation factor Tu.